The sequence spans 414 residues: tRNA N6-adenosine threonylcarbamoyltransferase, mitochondrial (414 aa).

The transit peptide at 1-29 (MLMLRRTAGAIPKPPKSKVYGFLRRFSVH) directs the protein to the mitochondrion. An N6-acetyllysine mark is found at K74 and K140. Residues H147 and H151 each coordinate a divalent metal cation. Residues 169–173 (LISGG) and D202 contribute to the substrate site. An N6-acetyllysine modification is found at K203. G222 and E226 together coordinate substrate. An N6-acetyllysine mark is found at K230 and K299. Substrate contacts are provided by residues 329-330 (SN) and T357. Residue D358 participates in a divalent metal cation binding.

It belongs to the KAE1 / TsaD family. As to quaternary structure, monomer. Requires a divalent metal cation as cofactor.

The protein localises to the mitochondrion. It catalyses the reaction L-threonylcarbamoyladenylate + adenosine(37) in tRNA = N(6)-L-threonylcarbamoyladenosine(37) in tRNA + AMP + H(+). Required for the formation of a threonylcarbamoyl group on adenosine at position 37 (t(6)A37) in mitochondrial tRNAs that read codons beginning with adenine. Probably involved in the transfer of the threonylcarbamoyl moiety of threonylcarbamoyl-AMP (TC-AMP) to the N6 group of A37. Involved in mitochondrial genome maintenance. The sequence is that of tRNA N6-adenosine threonylcarbamoyltransferase, mitochondrial from Mus musculus (Mouse).